A 97-amino-acid chain; its full sequence is Small ribosomal subunit protein uS17 (97 aa).

A disordered region spans residues 1–20; that stretch reads MSEATVNDNAAVKNEKGARK.

The protein belongs to the universal ribosomal protein uS17 family. In terms of assembly, part of the 30S ribosomal subunit.

Its function is as follows. One of the primary rRNA binding proteins, it binds specifically to the 5'-end of 16S ribosomal RNA. This Corynebacterium jeikeium (strain K411) protein is Small ribosomal subunit protein uS17.